A 290-amino-acid polypeptide reads, in one-letter code: 33 kDa chaperonin (290 aa).

2 cysteine pairs are disulfide-bonded: Cys236-Cys238 and Cys269-Cys272.

It belongs to the HSP33 family. In terms of processing, under oxidizing conditions two disulfide bonds are formed involving the reactive cysteines. Under reducing conditions zinc is bound to the reactive cysteines and the protein is inactive.

The protein resides in the cytoplasm. In terms of biological role, redox regulated molecular chaperone. Protects both thermally unfolding and oxidatively damaged proteins from irreversible aggregation. Plays an important role in the bacterial defense system toward oxidative stress. The polypeptide is 33 kDa chaperonin (Acholeplasma laidlawii (strain PG-8A)).